A 268-amino-acid chain; its full sequence is Octanoyltransferase (268 aa).

The BPL/LPL catalytic domain maps to 47-243; it reads PETPDQVWLV…ALCEVLAAHE (197 aa). Residues 87 to 94, 159 to 161, and 172 to 174 each bind substrate; these read RGGQITYH, ALG, and GVS. Cys190 acts as the Acyl-thioester intermediate in catalysis.

This sequence belongs to the LipB family.

It localises to the cytoplasm. The catalysed reaction is octanoyl-[ACP] + L-lysyl-[protein] = N(6)-octanoyl-L-lysyl-[protein] + holo-[ACP] + H(+). Its pathway is protein modification; protein lipoylation via endogenous pathway; protein N(6)-(lipoyl)lysine from octanoyl-[acyl-carrier-protein]: step 1/2. Its function is as follows. Catalyzes the transfer of endogenously produced octanoic acid from octanoyl-acyl-carrier-protein onto the lipoyl domains of lipoate-dependent enzymes. Lipoyl-ACP can also act as a substrate although octanoyl-ACP is likely to be the physiological substrate. This is Octanoyltransferase from Cupriavidus necator (strain ATCC 17699 / DSM 428 / KCTC 22496 / NCIMB 10442 / H16 / Stanier 337) (Ralstonia eutropha).